The following is a 79-amino-acid chain: RNA-binding protein Hfq (79 aa).

Residues 10-69 (DPFLNALRKEHVPVSIYLVNGIKLQGNIESFDQYVVLLRNTVTQMVYKHAISTVVPARPV) form the Sm domain.

Belongs to the Hfq family. As to quaternary structure, homohexamer.

Its function is as follows. RNA chaperone that binds small regulatory RNA (sRNAs) and mRNAs to facilitate mRNA translational regulation in response to envelope stress, environmental stress and changes in metabolite concentrations. Also binds with high specificity to tRNAs. The sequence is that of RNA-binding protein Hfq from Burkholderia cenocepacia (strain HI2424).